The primary structure comprises 145 residues: UI (145 aa).

The signal sequence occupies residues 1–22; the sequence is MKPVPLVLLITSVLLTTHIPLS. Val143 bears the Valine amide mark.

This sequence belongs to the sauvagine/corticotropin-releasing factor/urotensin I family.

It localises to the secreted. In terms of biological role, urotensin is found in the teleost caudal neurosecretory system. It has a suggested role in osmoregulation and as a corticotropin-releasing factor. The non-hormonal portion of this precursor may be a urotensin binding protein, urophysin. The sequence is that of UI from Carassius auratus (Goldfish).